The sequence spans 1061 residues: Protein pid-5 (1061 aa).

Belongs to the peptidase M24B family. As to quaternary structure, may interact with pid-2, app-1 and prmt-5.

The protein resides in the cytoplasm. Its subcellular location is the perinuclear region. The protein localises to the P-body. In terms of biological role, together with pid-4, it is involved in gene silencing mediated by a class of 21 nucleotide PIWI-interacting RNAs (piRNAs) that possess a uracil residue at the 5'-end (also called 21U-RNAs) and guide the Piwi protein prg-1 to its DNA targets for silencing. Together with pid-4, it is required for the biogenesis of secondary and tertiary 22G-siRNAs. Specifically, promotes the production of 22G-siRNAs from the 5' end of target mRNAs. Together with pid-4, plays a role in small RNA-directed transgenerational epigenetic inheritance (also called RNAe) over several generations and germline immortality. Together with pid-4, plays a role in the formation of liquid-like condensates in the cytoplasm called Z granules. This Caenorhabditis elegans protein is Protein pid-5.